Here is a 473-residue protein sequence, read N- to C-terminus: ATP synthase subunit beta (473 aa).

158-165 contacts ATP; that stretch reads GGAGVGKT.

It belongs to the ATPase alpha/beta chains family. In terms of assembly, F-type ATPases have 2 components, CF(1) - the catalytic core - and CF(0) - the membrane proton channel. CF(1) has five subunits: alpha(3), beta(3), gamma(1), delta(1), epsilon(1). CF(0) has three main subunits: a(1), b(2) and c(9-12). The alpha and beta chains form an alternating ring which encloses part of the gamma chain. CF(1) is attached to CF(0) by a central stalk formed by the gamma and epsilon chains, while a peripheral stalk is formed by the delta and b chains.

Its subcellular location is the cell membrane. The catalysed reaction is ATP + H2O + 4 H(+)(in) = ADP + phosphate + 5 H(+)(out). Functionally, produces ATP from ADP in the presence of a proton gradient across the membrane. The catalytic sites are hosted primarily by the beta subunits. This chain is ATP synthase subunit beta, found in Bacillus pumilus (strain SAFR-032).